The primary structure comprises 599 residues: Sulfite reductase [NADPH] flavoprotein alpha-component (599 aa).

In terms of domain architecture, Flavodoxin-like spans 64-202; the sequence is ITIISASQTG…AASEWRARVV (139 aa). Residues 70–75, 117–120, and 153–162 each bind FMN; these read SQTGNA, STQG, and LGDSSYEFFC. Residues 234-448 form the FAD-binding FR-type domain; it reads DAPLVASLSV…IEHNDNFRLP (215 aa). FAD is bound by residues T322, A356, 386-389, 404-406, Y410, and 419-422; these read RLYS, TVG, and GGAS. NADP(+)-binding positions include 519–520, 525–529, and D561; these read SR and KVYVQ. Y599 contacts FAD.

Belongs to the NADPH-dependent sulphite reductase flavoprotein subunit CysJ family. It in the N-terminal section; belongs to the flavodoxin family. The protein in the C-terminal section; belongs to the flavoprotein pyridine nucleotide cytochrome reductase family. In terms of assembly, alpha(8)-beta(8). The alpha component is a flavoprotein, the beta component is a hemoprotein. It depends on FAD as a cofactor. FMN serves as cofactor.

It catalyses the reaction hydrogen sulfide + 3 NADP(+) + 3 H2O = sulfite + 3 NADPH + 4 H(+). Its pathway is sulfur metabolism; hydrogen sulfide biosynthesis; hydrogen sulfide from sulfite (NADPH route): step 1/1. Functionally, component of the sulfite reductase complex that catalyzes the 6-electron reduction of sulfite to sulfide. This is one of several activities required for the biosynthesis of L-cysteine from sulfate. The flavoprotein component catalyzes the electron flow from NADPH -&gt; FAD -&gt; FMN to the hemoprotein component. The chain is Sulfite reductase [NADPH] flavoprotein alpha-component from Escherichia coli (strain ATCC 8739 / DSM 1576 / NBRC 3972 / NCIMB 8545 / WDCM 00012 / Crooks).